The sequence spans 279 residues: Pleckstrin homology domain-containing family F member 1 (279 aa).

One can recognise a PH domain in the interval 35 to 131; it reads VLLGEGVLTK…WISHIEECVR (97 aa). The segment at 152–212 adopts an FYVE-type zinc-finger fold; sequence DKATDICMRC…VCSLCYRELA (61 aa). Cys-158, Cys-161, Cys-175, Cys-178, Cys-183, Cys-186, Cys-204, and Cys-207 together coordinate Zn(2+). Positions 220 to 263 are disordered; the sequence is AREGIGGSPPQLSHLGGTVCGASSGDDDDSDEDREGNGDGDWPT. Residues 244-253 are compositionally biased toward acidic residues; it reads GDDDDSDEDR.

In terms of tissue distribution, widely expressed.

It is found in the nucleus. It localises to the cytoplasm. Its subcellular location is the perinuclear region. The protein localises to the lysosome. Functionally, may induce apoptosis through the lysosomal-mitochondrial pathway. Translocates to the lysosome initiating the permeabilization of lysosomal membrane (LMP) and resulting in the release of CTSD and CTSL to the cytoplasm. Triggers the caspase-independent apoptosis by altering mitochondrial membrane permeabilization (MMP) resulting in the release of PDCD8. This chain is Pleckstrin homology domain-containing family F member 1 (Plekhf1), found in Mus musculus (Mouse).